The sequence spans 175 residues: Thioredoxin-like protein CITRX, chloroplastic (175 aa).

The N-terminal 64 residues, 1–64 (MQAASLAFHP…KPPAVGKYVR (64 aa)), are a transit peptide targeting the chloroplast. The region spanning 74-175 (AKEIQELIKG…MMRDIIDNDL (102 aa)) is the Thioredoxin domain. Residues Cys98 and Cys101 each act as nucleophile in the active site. A disulfide bridge links Cys98 with Cys101.

The protein belongs to the thioredoxin family. Plant CITRX-type subfamily. As to quaternary structure, interacts with Cf-9 resistance protein.

It is found in the plastid. The protein resides in the chloroplast. Functionally, probable thiol-disulfide oxidoreductase that may play a role in proper chloroplast development. The chain is Thioredoxin-like protein CITRX, chloroplastic from Solanum lycopersicum (Tomato).